Consider the following 1004-residue polypeptide: Sal-like protein 2 (1004 aa).

Disordered stretches follow at residues 1-33 (MSRR…EDHP), 51-122 (AHQN…EESS), 137-177 (GGGL…SGHL), 220-270 (PASP…EPPK), and 285-307 (PFSV…ALPG). A C2H2-type 1; atypical zinc finger spans residues 34-56 (QVCAKCCAQFSDPTEFLAHQNSC). Positions 71 to 81 (NPSNSSASSAP) are enriched in low complexity. The segment covering 83–98 (PEGHSRSQVMDTEHSN) has biased composition (basic and acidic residues). The span at 99–110 (PPDSGSSGAPDP) shows a compositional bias: low complexity. Positions 151-171 (PLPPESTPAPPPPPPPPPPPG) are enriched in pro residues. Serine 243 is subject to Phosphoserine. C2H2-type zinc fingers lie at residues 372-394 (HKCR…LRSH), 400-422 (YKCN…FHRH), 629-651 (NQCV…YGQH), 657-679 (FKCK…FVGH), and 689-711 (NSCP…VRMH). A disordered region spans residues 712-910 (LGGQIPNGGS…PGESSGRKAC (199 aa)). Positions 731-742 (QENSSEQSTASG) are enriched in polar residues. The span at 756-779 (PEEEMSEEEEEDEEEEEDVTDEDS) shows a compositional bias: acidic residues. A phosphoserine mark is found at serine 794, serine 799, and serine 803. Positions 800–809 (EEVSGAEEEV) are enriched in acidic residues. Positions 810–819 (ATSVAAPTTV) are enriched in low complexity. The segment covering 820–829 (KEMDSNEKAP) has biased composition (basic and acidic residues). A compositionally biased stretch (pro residues) spans 832–841 (TLPPPPPPPD). Residues 896 to 910 (AMKKDPGESSGRKAC) are compositionally biased toward basic and acidic residues. A Glycyl lysine isopeptide (Lys-Gly) (interchain with G-Cter in ubiquitin) cross-link involves residue lysine 908. 2 consecutive C2H2-type zinc fingers follow at residues 908 to 930 (KACE…QKTH) and 937 to 961 (FTCV…LAHH).

It belongs to the sal C2H2-type zinc-finger protein family. Expressed throughout embryonic development. In adult predominantly in brain.

Its subcellular location is the nucleus. In terms of biological role, probable transcription factor that plays a role in eye development before, during, and after optic fissure closure. The protein is Sal-like protein 2 (Sall2) of Mus musculus (Mouse).